The sequence spans 282 residues: MNSSSSTMNEEPDALSVVNQLRDLAADPLNRRAIVQDQGCLPGLILFMDHPNPPVVHSALLALRYLAECRANREKMKGELGMMLSLQNVIQKTTTPGETKLLASEIYDILQSSNLADGDSFNEMNSRRRKAQFFLGTTNKRAKTVVLHIDGLDDTSRRNLCEEALLKIKGVISFTFQMAVQRCVVRIRSDLKAEALASAIASTKVMKAQQVVKSESGEEMLVPFQDAPVEVEENTELPDYLPEDESPTKEQDKAVSRVGSHPEGGASWLSTAANFLSRSFYW.

Met-1 carries the N-acetylmethionine modification. Residues 39–81 form an ARM repeat; it reads GCLPGLILFMDHPNPPVVHSALLALRYLAECRANREKMKGELG. At Thr-137 the chain carries Phosphothreonine. 4 positions are modified to phosphoserine: Ser-189, Ser-246, Ser-260, and Ser-267. The disordered stretch occupies residues 239–261; that stretch reads DYLPEDESPTKEQDKAVSRVGSH. Positions 246 to 255 are enriched in basic and acidic residues; the sequence is SPTKEQDKAV.

Interacts with mitochondrial contact site and cristae organizing system (MICOS) complex components IMMT/MIC60 and MICOS10/MIC10. Interacts with mitochondrial outer membrane sorting assembly machinery (SAM) complex components SAMM50 and MTX1.

It localises to the cytoplasm. It is found in the mitochondrion. Its subcellular location is the mitochondrion outer membrane. In terms of biological role, in association with mitochondrial contact site and cristae organizing system (MICOS) complex components and mitochondrial outer membrane sorting assembly machinery (SAM) complex components may regulate mitochondrial dynamics playing a role in determining mitochondrial length, distribution and motility. The chain is Armadillo repeat-containing protein 1 (Armc1) from Mus musculus (Mouse).